The sequence spans 365 residues: Alanine racemase (365 aa).

Residue Lys-35 is the Proton acceptor; specific for D-alanine of the active site. Position 35 is an N6-(pyridoxal phosphate)lysine (Lys-35). Residue Arg-130 participates in substrate binding. The active-site Proton acceptor; specific for L-alanine is the Tyr-256. A substrate-binding site is contributed by Met-304.

Belongs to the alanine racemase family. Pyridoxal 5'-phosphate is required as a cofactor.

It carries out the reaction L-alanine = D-alanine. The protein operates within amino-acid biosynthesis; D-alanine biosynthesis; D-alanine from L-alanine: step 1/1. Its function is as follows. Catalyzes the interconversion of L-alanine and D-alanine. May also act on other amino acids. The sequence is that of Alanine racemase (alr) from Acidovorax sp. (strain JS42).